The following is a 430-amino-acid chain: Enolase (430 aa).

Residue Gln163 participates in (2R)-2-phosphoglycerate binding. The Proton donor role is filled by Glu205. The Mg(2+) site is built by Asp242, Glu287, and Asp314. (2R)-2-phosphoglycerate contacts are provided by Lys339, Arg368, Ser369, and Lys390. The active-site Proton acceptor is the Lys339.

This sequence belongs to the enolase family. Requires Mg(2+) as cofactor.

It is found in the cytoplasm. The protein localises to the secreted. Its subcellular location is the cell surface. The catalysed reaction is (2R)-2-phosphoglycerate = phosphoenolpyruvate + H2O. It participates in carbohydrate degradation; glycolysis; pyruvate from D-glyceraldehyde 3-phosphate: step 4/5. Its function is as follows. Catalyzes the reversible conversion of 2-phosphoglycerate (2-PG) into phosphoenolpyruvate (PEP). It is essential for the degradation of carbohydrates via glycolysis. This Exiguobacterium sp. (strain ATCC BAA-1283 / AT1b) protein is Enolase.